A 220-amino-acid polypeptide reads, in one-letter code: Urease accessory protein UreG (220 aa).

18–25 (GPVGSGKT) is a binding site for GTP.

The protein belongs to the SIMIBI class G3E GTPase family. UreG subfamily. As to quaternary structure, homodimer. UreD, UreF and UreG form a complex that acts as a GTP-hydrolysis-dependent molecular chaperone, activating the urease apoprotein by helping to assemble the nickel containing metallocenter of UreC. The UreE protein probably delivers the nickel.

It is found in the cytoplasm. Facilitates the functional incorporation of the urease nickel metallocenter. This process requires GTP hydrolysis, probably effectuated by UreG. The protein is Urease accessory protein UreG of Yersinia pestis.